A 130-amino-acid chain; its full sequence is Small ribosomal subunit protein uS11 (130 aa).

Belongs to the universal ribosomal protein uS11 family. As to quaternary structure, part of the 30S ribosomal subunit. Interacts with proteins S7 and S18. Binds to IF-3.

In terms of biological role, located on the platform of the 30S subunit, it bridges several disparate RNA helices of the 16S rRNA. Forms part of the Shine-Dalgarno cleft in the 70S ribosome. The polypeptide is Small ribosomal subunit protein uS11 (Xylella fastidiosa (strain M12)).